The sequence spans 135 residues: Crossover junction endodeoxyribonuclease Hje (135 aa).

Mg(2+) is bound by residues E10, D39, and E52.

The protein belongs to the Holliday junction resolvase Hjc family. Hje subfamily. In terms of assembly, homodimer. It depends on Mg(2+) as a cofactor.

It carries out the reaction Endonucleolytic cleavage at a junction such as a reciprocal single-stranded crossover between two homologous DNA duplexes (Holliday junction).. A structure-specific endonuclease that resolves Holliday junction (HJ) intermediates during genetic recombination. Acts only on 4-way DNA junctions in a sequence non-specific manner; introduces paired nicks in opposing strands 2 bases 3' of the point of strand exchange only on continuous strands of 4-way junction DNA. Cleaves both mobile and immobile junctions. Plays a more direct role in DNA repair than Hjc. Overexpression of this protein decreases the growth rate, and leads to genomic instability, and global transcriptomic changes. In Saccharolobus islandicus (strain REY15A) (Sulfolobus islandicus), this protein is Crossover junction endodeoxyribonuclease Hje.